The following is a 315-amino-acid chain: Putative serine/threonine-protein phosphatase PP2A-4 catalytic subunit (315 aa).

Positions 63, 65, 91, and 123 each coordinate Mn(2+). H124 serves as the catalytic Proton donor. Residues H173 and H247 each coordinate Mn(2+).

It belongs to the PPP phosphatase family. PP-2A subfamily. It depends on Mn(2+) as a cofactor.

It is found in the cytoplasm. The enzyme catalyses O-phospho-L-seryl-[protein] + H2O = L-seryl-[protein] + phosphate. The catalysed reaction is O-phospho-L-threonyl-[protein] + H2O = L-threonyl-[protein] + phosphate. The polypeptide is Putative serine/threonine-protein phosphatase PP2A-4 catalytic subunit (PP2A4) (Oryza sativa subsp. indica (Rice)).